The sequence spans 296 residues: MSQKELWYETLHANFGQYFSVENVLYREKTEHQDLVIFENPELGRVMALDGVVQTTERDEFIYHEMMTHVPLLAHGQAKKVLIIGGGDGAMLREVSRHKNIEQITMVEIDAGVVEFCRQYLPNHSAGAYDDPRFKLVIDDGVNFVNQTTEKFDVIISDCTDPIGPGESLFTSVFYEGCARSLNEGGIFVAQNGVCFLQQDEAVNSHNKLSHYFSDVSFYQAAIPTYYGGIMTFAWATQNPALRQLDLATLQNRFAQAGLACRYYNPAIHVGSFALPQYLLDALTTIPKVIGVDSSE.

A PABS domain is found at 5 to 238 (ELWYETLHAN…GIMTFAWATQ (234 aa)). Glutamine 33 lines the S-methyl-5'-thioadenosine pocket. The spermidine site is built by histidine 64 and aspartate 88. S-methyl-5'-thioadenosine is bound by residues glutamate 108 and 140–141 (DG). The active-site Proton acceptor is the aspartate 158. Residue 158 to 161 (DCTD) participates in spermidine binding. Proline 165 lines the S-methyl-5'-thioadenosine pocket.

This sequence belongs to the spermidine/spermine synthase family. In terms of assembly, homodimer or homotetramer.

Its subcellular location is the cytoplasm. It carries out the reaction S-adenosyl 3-(methylsulfanyl)propylamine + putrescine = S-methyl-5'-thioadenosine + spermidine + H(+). It functions in the pathway amine and polyamine biosynthesis; spermidine biosynthesis; spermidine from putrescine: step 1/1. Functionally, catalyzes the irreversible transfer of a propylamine group from the amino donor S-adenosylmethioninamine (decarboxy-AdoMet) to putrescine (1,4-diaminobutane) to yield spermidine. The sequence is that of Polyamine aminopropyltransferase from Yersinia pseudotuberculosis serotype O:1b (strain IP 31758).